We begin with the raw amino-acid sequence, 103 residues long: Iron-sulfur cluster assembly protein CyaY (103 aa).

This sequence belongs to the frataxin family.

In terms of biological role, involved in iron-sulfur (Fe-S) cluster assembly. May act as a regulator of Fe-S biogenesis. In Rickettsia africae (strain ESF-5), this protein is Iron-sulfur cluster assembly protein CyaY.